Here is a 265-residue protein sequence, read N- to C-terminus: Tryptophan synthase alpha chain (265 aa).

Catalysis depends on proton acceptor residues Glu49 and Asp60.

The protein belongs to the TrpA family. In terms of assembly, tetramer of two alpha and two beta chains.

It catalyses the reaction (1S,2R)-1-C-(indol-3-yl)glycerol 3-phosphate + L-serine = D-glyceraldehyde 3-phosphate + L-tryptophan + H2O. It functions in the pathway amino-acid biosynthesis; L-tryptophan biosynthesis; L-tryptophan from chorismate: step 5/5. In terms of biological role, the alpha subunit is responsible for the aldol cleavage of indoleglycerol phosphate to indole and glyceraldehyde 3-phosphate. The sequence is that of Tryptophan synthase alpha chain from Paracoccus denitrificans (strain Pd 1222).